Reading from the N-terminus, the 220-residue chain is Cell division protein SepF (220 aa).

The tract at residues 1-120 (MAIKDAFNKM…RREQYQHAAH (120 aa)) is disordered. Residues 26 to 35 (LSSKKQEEPV) show a composition bias toward basic and acidic residues. Positions 39 to 79 (QQTSRPNQQQQAARASQPQQPKQARPQMQAQQRPQSQSRAA) are enriched in low complexity. Over residues 93–102 (VSHDYNDRRA) the composition is skewed to basic and acidic residues.

This sequence belongs to the SepF family. As to quaternary structure, homodimer. Interacts with FtsZ.

The protein resides in the cytoplasm. In terms of biological role, cell division protein that is part of the divisome complex and is recruited early to the Z-ring. Probably stimulates Z-ring formation, perhaps through the cross-linking of FtsZ protofilaments. Its function overlaps with FtsA. The protein is Cell division protein SepF of Streptococcus equi subsp. equi (strain 4047).